The sequence spans 250 residues: Snake venom serine protease pictobin (250 aa).

A signal peptide spans 1-11 (ANLLILQVSYA). The propeptide occupies 12–17 (QKSSEL). Residues 18 to 241 (VIGGDECNIN…HLHWILSIIA (224 aa)) enclose the Peptidase S1 domain. 5 disulfides stabilise this stretch: C24/C155, C42/C58, C134/C202, C166/C181, and C192/C217. H57 acts as the Charge relay system in catalysis. N-linked (GlcNAc...) asparagine glycans are attached at residues N71 and N95. D102 (charge relay system) is an active-site residue. N-linked (GlcNAc...) asparagine glycosylation is found at N146 and N162. S196 acts as the Charge relay system in catalysis. The N-linked (GlcNAc...) asparagine glycan is linked to N243.

The protein belongs to the peptidase S1 family. Snake venom subfamily. Monomer. Expressed by the venom gland.

The protein resides in the secreted. Its function is as follows. Snake venom serine protease that may impair the hemostatic system of the prey. The polypeptide is Snake venom serine protease pictobin (Bothrops pictus (Desert lancehead)).